A 695-amino-acid chain; its full sequence is Polyribonucleotide nucleotidyltransferase (695 aa).

Residues Asp-486 and Asp-492 each contribute to the Mg(2+) site. The region spanning 553 to 612 is the KH domain; that stretch reads PRIETMQINTSKIATVIGPGGKQIRQIIERSGAQVDINDDGVINIAASTQESINKAKELI. Residues 622-690 enclose the S1 motif domain; sequence GKVYNGRVTS…EKGQLKLSHK (69 aa).

Belongs to the polyribonucleotide nucleotidyltransferase family. Mg(2+) is required as a cofactor.

The protein resides in the cytoplasm. It catalyses the reaction RNA(n+1) + phosphate = RNA(n) + a ribonucleoside 5'-diphosphate. In terms of biological role, involved in mRNA degradation. Catalyzes the phosphorolysis of single-stranded polyribonucleotides processively in the 3'- to 5'-direction. The sequence is that of Polyribonucleotide nucleotidyltransferase from Chlamydia trachomatis serovar A (strain ATCC VR-571B / DSM 19440 / HAR-13).